The sequence spans 199 residues: Translation initiation factor IF-3 (199 aa).

This sequence belongs to the IF-3 family. As to quaternary structure, monomer.

The protein localises to the cytoplasm. IF-3 binds to the 30S ribosomal subunit and shifts the equilibrium between 70S ribosomes and their 50S and 30S subunits in favor of the free subunits, thus enhancing the availability of 30S subunits on which protein synthesis initiation begins. This is Translation initiation factor IF-3 from Gloeobacter violaceus (strain ATCC 29082 / PCC 7421).